Here is a 75-residue protein sequence, read N- to C-terminus: MLILSRKENESIIIGEGIEIKVVQTGKGYAKIGIEAPKSLMILRKELVQQVKDENLHSVVQNDIKLDDLSKKLIK.

This sequence belongs to the CsrA/RsmA family. In terms of assembly, homodimer; the beta-strands of each monomer intercalate to form a hydrophobic core, while the alpha-helices form wings that extend away from the core. Interacts with FliW.

Its subcellular location is the cytoplasm. A translational regulator that binds mRNA to regulate translation initiation and/or mRNA stability. Usually binds in the 5'-UTR at or near the Shine-Dalgarno sequence preventing ribosome-binding, thus repressing translation. Its function is probably anatagonized by FliW. Inhibits translation of flaA mRNA in vitro. Involved in post-transcriptional regulation of flagellin biosynthesis. This is Translational regulator CsrA from Campylobacter jejuni subsp. jejuni serotype O:6 (strain 81116 / NCTC 11828).